We begin with the raw amino-acid sequence, 245 residues long: Tryptophan synthase alpha chain (245 aa).

Catalysis depends on proton acceptor residues E37 and D48.

This sequence belongs to the TrpA family. As to quaternary structure, tetramer of two alpha and two beta chains.

The catalysed reaction is (1S,2R)-1-C-(indol-3-yl)glycerol 3-phosphate + L-serine = D-glyceraldehyde 3-phosphate + L-tryptophan + H2O. Its pathway is amino-acid biosynthesis; L-tryptophan biosynthesis; L-tryptophan from chorismate: step 5/5. Functionally, the alpha subunit is responsible for the aldol cleavage of indoleglycerol phosphate to indole and glyceraldehyde 3-phosphate. The protein is Tryptophan synthase alpha chain of Saccharolobus solfataricus (strain ATCC 35092 / DSM 1617 / JCM 11322 / P2) (Sulfolobus solfataricus).